The sequence spans 2893 residues: Genome polyprotein (2893 aa).

Residues 206–226 are disordered; it reads VQAKPEMDNPNPGPDGEGEVE. The SF3 helicase domain maps to 1446–1612; the sequence is SKLKTDLMEM…EEKKRGCKHC (167 aa). 1472–1479 contacts ATP; that stretch reads GASGIGKS. Residues 2119-2345 form the Peptidase C3 domain; the sequence is GSTQQVDAAV…VAEPLVHEMF (227 aa). Active-site for 3C-like protease activity residues include H2170, N2227, and C2307. The 131-residue stretch at 2633 to 2763 folds into the RdRp catalytic domain; the sequence is THIVTGDYKN…NVSDNMIDKF (131 aa).

In terms of processing, specific enzymatic cleavages in vivo by the viral 3C-like protease yield three mature proteins. 3C-like protease is cleaved autocatalytically.

It is found in the virion. It catalyses the reaction RNA(n) + a ribonucleoside 5'-triphosphate = RNA(n+1) + diphosphate. The enzyme catalyses ATP + H2O = ADP + phosphate + H(+). With respect to regulation, inhibited by Rupintrivir. In terms of biological role, capsid protein that assembles with the capsid proteins VP1 and VP3 to form a pseudo-T3 icosahedral capsid of about 40 nm. Functionally, capsid protein that assembles with the capsid proteins VP1 and VP2 to form a pseudo T3 icosahedral capsid of about 40 nm. Capsid protein that assembles with the capsid proteins VP2 and VP3 to form a pseudo T3 icosahedral capsid of about 40 nm. Its function is as follows. Displays RNA helix destabilizing and strand annealing acceleration activity. This activity is necessary at several points during genome replication, for example to separate duplexes that form after genome replication. In terms of biological role, cysteine protease that generates mature viral proteins from the precursor polyprotein. Functionally, replicates genomic and antigenomic RNA. The polypeptide is Genome polyprotein (Deformed wing virus (DWV)).